Reading from the N-terminus, the 358-residue chain is Holliday junction branch migration complex subunit RuvB (358 aa).

The tract at residues 1–24 is disordered; the sequence is MAIKRSHNSPPATEENLLTPNPTI. Polar residues predominate over residues 8 to 22; it reads NSPPATEENLLTPNP. The interval 13 to 195 is large ATPase domain (RuvB-L); it reads TEENLLTPNP…FGLIQRLRFY (183 aa). Residues Ile-34, Arg-35, Gly-76, Lys-79, Thr-80, Thr-81, 142-144, Arg-185, Tyr-195, and Arg-232 each bind ATP; that span reads EDY. Residue Thr-80 coordinates Mg(2+). The segment at 196-266 is small ATPAse domain (RuvB-S); that stretch reads AVEELTAIIL…LAAEGLNQLN (71 aa). The interval 269–358 is head domain (RuvB-H); that stretch reads SMGLDWTDRL…KDRSLPLFEF (90 aa). DNA contacts are provided by Arg-324 and Arg-329.

This sequence belongs to the RuvB family. Homohexamer. Forms an RuvA(8)-RuvB(12)-Holliday junction (HJ) complex. HJ DNA is sandwiched between 2 RuvA tetramers; dsDNA enters through RuvA and exits via RuvB. An RuvB hexamer assembles on each DNA strand where it exits the tetramer. Each RuvB hexamer is contacted by two RuvA subunits (via domain III) on 2 adjacent RuvB subunits; this complex drives branch migration. In the full resolvosome a probable DNA-RuvA(4)-RuvB(12)-RuvC(2) complex forms which resolves the HJ.

The protein localises to the cytoplasm. The catalysed reaction is ATP + H2O = ADP + phosphate + H(+). In terms of biological role, the RuvA-RuvB-RuvC complex processes Holliday junction (HJ) DNA during genetic recombination and DNA repair, while the RuvA-RuvB complex plays an important role in the rescue of blocked DNA replication forks via replication fork reversal (RFR). RuvA specifically binds to HJ cruciform DNA, conferring on it an open structure. The RuvB hexamer acts as an ATP-dependent pump, pulling dsDNA into and through the RuvAB complex. RuvB forms 2 homohexamers on either side of HJ DNA bound by 1 or 2 RuvA tetramers; 4 subunits per hexamer contact DNA at a time. Coordinated motions by a converter formed by DNA-disengaged RuvB subunits stimulates ATP hydrolysis and nucleotide exchange. Immobilization of the converter enables RuvB to convert the ATP-contained energy into a lever motion, pulling 2 nucleotides of DNA out of the RuvA tetramer per ATP hydrolyzed, thus driving DNA branch migration. The RuvB motors rotate together with the DNA substrate, which together with the progressing nucleotide cycle form the mechanistic basis for DNA recombination by continuous HJ branch migration. Branch migration allows RuvC to scan DNA until it finds its consensus sequence, where it cleaves and resolves cruciform DNA. The protein is Holliday junction branch migration complex subunit RuvB of Microcystis aeruginosa (strain NIES-843 / IAM M-2473).